The chain runs to 317 residues: COP9 signalosome complex subunit 6b (317 aa).

In terms of domain architecture, MPN spans 11–164; sequence FKLHPLVMLN…VTIYESEFHV (154 aa).

It belongs to the peptidase M67A family. CSN6 subfamily. In terms of assembly, component of the CSN complex, probably composed of CSN1, CSN2, CSN3, CSN4, CSN5 (CSN5A or CSN5B), CSN6 (CSN6A or CSN6B), CSN7 and CSN8. Interacts with itself. In the complex, it probably interacts directly with CSN4, CSN5A or CSN5B, and CSN7. Binds to the translation initiation factors TIF3E1.

The protein localises to the cytoplasm. It localises to the nucleus. In terms of biological role, component of the COP9 signalosome complex (CSN), a complex involved in various cellular and developmental processes such as photomorphogenesis and auxin and jasmonate responses. The CSN complex is an essential regulator of the ubiquitin (Ubl) conjugation pathway by mediating the deneddylation of the cullin subunits of SCF-type E3 ligase complexes, leading to decrease the Ubl ligase activity of SCF. It is involved in repression of photomorphogenesis in darkness by regulating the activity of COP1-containing Ubl ligase complexes. The complex is also required for degradation of PSIAA6 by regulating the activity of the Ubl ligase SCF-TIR complex. Essential for the structural integrity of the CSN holocomplex. This chain is COP9 signalosome complex subunit 6b, found in Arabidopsis thaliana (Mouse-ear cress).